Reading from the N-terminus, the 709-residue chain is Rho guanine nucleotide exchange factor 16 (709 aa).

A2 bears the N-acetylalanine mark. A phosphoserine mark is found at S6, S41, and S107. A disordered region spans residues 22 to 70 (ELRLDAGGNPASGLPMVRGSPRVRDDAAFQPQVPAPPQPRPPGHEEPWP). The segment at 114–146 (SREAARRDPKLLPAPSFSLDDMDVDKDPGGMLR) is disordered. Phosphoserine occurs at positions 174, 191, and 208. Residues 180–246 (LAEEPSQPHT…ESSSPEGTQK (67 aa)) form a disordered region. Residues 191-207 (SPAKNKKTLGRKRGHKG) are compositionally biased toward basic residues. T226 bears the Phosphothreonine mark. Residues S227, S230, and S240 each carry the phosphoserine modification. Residues 275–481 (LDQLSTEERK…MERMEQMYTL (207 aa)) form a required for RHOG activation and mediates interaction with EPHA2 region. One can recognise a DH domain in the interval 284–468 (KRQEAMFEIL…SKLVRQCNEG (185 aa)). The PH domain occupies 501–620 (WLLKRGELFL…WIVALTHSER (120 aa)). One can recognise an SH3 domain in the interval 629–689 (GDLPQVEITK…PEDFARFITS (61 aa)). The PDZ-binding motif motif lies at 707–709 (TDV).

Interacts with ELMO2, EPHA2, RAC1 and RHOG; mediates activation of RAC1 by EPHA2. Interacts with TAX1BP3 (via PDZ domain). May interact with CDC42; stimulated by HPV16 E6.

The protein localises to the cytoplasm. In terms of biological role, guanyl-nucleotide exchange factor of the RHOG GTPase stimulating the exchange of RHOG-associated GDP for GTP. May play a role in chemotactic cell migration by mediating the activation of RAC1 by EPHA2. May also activate CDC42 and mediate activation of CDC42 by the viral protein HPV16 E6. In Homo sapiens (Human), this protein is Rho guanine nucleotide exchange factor 16 (ARHGEF16).